Consider the following 379-residue polypeptide: MELLTTVASFFTPTTLFLLLNLMIGTIVVTSRLGSGSRKHYQHHDGFGSGHAPAPLARAPSIIDRVKSINFHLYKFPHPETELFSMTAHHDIIGSDLHVYPDPNPAPLQRAPSLLDRVKSINMSYFKFPHDVTGSDPHSHSHSHLDLHPDPAPAPLQRAPSLLDRVKSINMSYFKFQQYNPEENDYAHHTEPTRFESIPTRMGRVDPIDISKFRIPEEDQPTGTGVNSQINPPGLTRAPSILERVKSIKLSSFYRSDPDLDQKQNPDPVLHEEHKHVRSKSESKKPVKKKKKALTKMTKSASEKSGFGFAGSHAEAPETVESLERRRPDTTRVERSTSFGDGEDGVDAKASDFINKFKQQLKLQRLDSILRYKEMLKAH.

A helical membrane pass occupies residues 7–29 (VASFFTPTTLFLLLNLMIGTIVV). Asparagine 122 is a glycosylation site (N-linked (GlcNAc...) asparagine). Residues 133–154 (TGSDPHSHSHSHLDLHPDPAPA) are disordered. The span at 137–149 (PHSHSHSHLDLHP) shows a compositional bias: basic and acidic residues. Asparagine 170 is a glycosylation site (N-linked (GlcNAc...) asparagine). 2 disordered regions span residues 216–238 (PEED…LTRA) and 256–347 (SDPD…DGVD). The segment covering 221 to 231 (PTGTGVNSQIN) has biased composition (polar residues). Basic and acidic residues-rich tracts occupy residues 256 to 285 (SDPD…ESKK) and 322 to 335 (SLER…RVER).

The protein localises to the membrane. In Arabidopsis thaliana (Mouse-ear cress), this protein is Pathogen-associated molecular patterns-induced protein A70.